The following is a 303-amino-acid chain: DDRGK domain-containing protein 1 (303 aa).

The Lumenal segment spans residues 1–2; sequence MD. A helical transmembrane segment spans residues 3–23; sequence LILLIGIATALLIILLTLYFL. Residues 24–303 are Cytoplasmic-facing; sequence QKRNAPAETK…TPVTASEGGA (280 aa). 2 disordered regions span residues 31 to 53 and 84 to 160; these read ETKA…VPRR and AIDP…AEVE. Residues 106–160 show a composition bias toward basic and acidic residues; it reads LDEKMGAKKRAKMEAKEQKRLQREQELHDREQRKVKEAKEEAERKQQDDLDAEVE.

It belongs to the DDRGK1 family. As to quaternary structure, interacts with Atg9; the interaction is transient.

The protein resides in the endoplasmic reticulum membrane. Functionally, substrate adapter for ufmylation, the covalent attachment of the ubiquitin-like modifier UFM1 to substrate proteins. Required for ufmylation of Atg9; protects the nervous system during aging, possibly by stabilizing Atg9 and supporting its function. The chain is DDRGK domain-containing protein 1 from Drosophila grimshawi (Hawaiian fruit fly).